The sequence spans 968 residues: Ribonuclease E (968 aa).

Residues 39–119 form the S1 motif domain; sequence SNIYKGKITR…GTKGAALTTF (81 aa). Aspartate 303 and aspartate 346 together coordinate Mg(2+). Positions 404 and 407 each coordinate Zn(2+). A required for zinc-mediated homotetramerization and catalytic activity region spans residues 404–407; it reads CPRC. Positions 947 to 968 are disordered; it reads IKNSAGAHSATNFSTSPVKKSE. The segment covering 955–968 has biased composition (polar residues); sequence SATNFSTSPVKKSE.

The protein belongs to the RNase E/G family. RNase E subfamily. In terms of assembly, component of the RNA degradosome, which is a multiprotein complex involved in RNA processing and mRNA degradation. Within the RNA degradosome, RNase E assembles into a homotetramer formed by a dimer of dimers. Zn(2+) is required as a cofactor. It depends on Mg(2+) as a cofactor.

It localises to the cytoplasm. It is found in the cell inner membrane. It carries out the reaction Endonucleolytic cleavage of single-stranded RNA in A- and U-rich regions.. Endoribonuclease that plays a central role in RNA processing and decay. Required for the maturation of 5S and 16S rRNAs and the majority of tRNAs. Also involved in the degradation of most mRNAs. The protein is Ribonuclease E of Buchnera aphidicola subsp. Schizaphis graminum (strain Sg).